Consider the following 102-residue polypeptide: NADH-quinone oxidoreductase subunit K (102 aa).

A run of 3 helical transmembrane segments spans residues 5 to 25 (LTQY…GIIL), 30 to 50 (IIII…NLVA), and 62 to 82 (IFAL…LAIL).

It belongs to the complex I subunit 4L family. In terms of assembly, NDH-1 is composed of 14 different subunits. Subunits NuoA, H, J, K, L, M, N constitute the membrane sector of the complex.

The protein resides in the cell inner membrane. It catalyses the reaction a quinone + NADH + 5 H(+)(in) = a quinol + NAD(+) + 4 H(+)(out). In terms of biological role, NDH-1 shuttles electrons from NADH, via FMN and iron-sulfur (Fe-S) centers, to quinones in the respiratory chain. The immediate electron acceptor for the enzyme in this species is believed to be ubiquinone. Couples the redox reaction to proton translocation (for every two electrons transferred, four hydrogen ions are translocated across the cytoplasmic membrane), and thus conserves the redox energy in a proton gradient. The chain is NADH-quinone oxidoreductase subunit K from Beijerinckia indica subsp. indica (strain ATCC 9039 / DSM 1715 / NCIMB 8712).